The chain runs to 87 residues: Cell division topological specificity factor (87 aa).

This sequence belongs to the MinE family.

Prevents the cell division inhibition by proteins MinC and MinD at internal division sites while permitting inhibition at polar sites. This ensures cell division at the proper site by restricting the formation of a division septum at the midpoint of the long axis of the cell. The chain is Cell division topological specificity factor from Roseiflexus sp. (strain RS-1).